We begin with the raw amino-acid sequence, 184 residues long: 2-C-methyl-D-erythritol 2,4-cyclodiphosphate synthase (184 aa).

Residues Asp17 and His19 each coordinate a divalent metal cation. Residues 17 to 19 (DVH) and 47 to 48 (HS) each bind 4-CDP-2-C-methyl-D-erythritol 2-phosphate. His55 is a binding site for a divalent metal cation. 4-CDP-2-C-methyl-D-erythritol 2-phosphate contacts are provided by residues 74-78 (FPNTD), Phe152, and Arg155.

The protein belongs to the IspF family. Homotrimer. A divalent metal cation is required as a cofactor.

The enzyme catalyses 4-CDP-2-C-methyl-D-erythritol 2-phosphate = 2-C-methyl-D-erythritol 2,4-cyclic diphosphate + CMP. It functions in the pathway isoprenoid biosynthesis; isopentenyl diphosphate biosynthesis via DXP pathway; isopentenyl diphosphate from 1-deoxy-D-xylulose 5-phosphate: step 4/6. In terms of biological role, involved in the biosynthesis of isopentenyl diphosphate (IPP) and dimethylallyl diphosphate (DMAPP), two major building blocks of isoprenoid compounds. Catalyzes the conversion of 4-diphosphocytidyl-2-C-methyl-D-erythritol 2-phosphate (CDP-ME2P) to 2-C-methyl-D-erythritol 2,4-cyclodiphosphate (ME-CPP) with a corresponding release of cytidine 5-monophosphate (CMP). This Anaplasma marginale (strain St. Maries) protein is 2-C-methyl-D-erythritol 2,4-cyclodiphosphate synthase.